The sequence spans 67 residues: MGEISITKLLVVAALIVLVFGTKKLRTLGGDLGSAIKGFKKAMNDDDTSVKKSAEEDVPADKISHKE.

A helical transmembrane segment spans residues 4-21 (ISITKLLVVAALIVLVFG). A disordered region spans residues 43 to 67 (MNDDDTSVKKSAEEDVPADKISHKE).

Belongs to the TatA/E family. TatE subfamily.

Its subcellular location is the cell inner membrane. In terms of biological role, part of the twin-arginine translocation (Tat) system that transports large folded proteins containing a characteristic twin-arginine motif in their signal peptide across membranes. TatE shares overlapping functions with TatA. The protein is Probable Sec-independent protein translocase protein TatE of Enterobacter lignolyticus (strain SCF1).